The primary structure comprises 195 residues: Molybdenum cofactor guanylyltransferase (195 aa).

GTP is bound by residues leucine 12–glycine 14, lysine 25, asparagine 53, aspartate 70, and aspartate 100. Aspartate 100 contributes to the Mg(2+) binding site.

It belongs to the MobA family. Monomer. Requires Mg(2+) as cofactor.

Its subcellular location is the cytoplasm. It catalyses the reaction Mo-molybdopterin + GTP + H(+) = Mo-molybdopterin guanine dinucleotide + diphosphate. Transfers a GMP moiety from GTP to Mo-molybdopterin (Mo-MPT) cofactor (Moco or molybdenum cofactor) to form Mo-molybdopterin guanine dinucleotide (Mo-MGD) cofactor. The sequence is that of Molybdenum cofactor guanylyltransferase from Vibrio vulnificus (strain YJ016).